The chain runs to 286 residues: Nucleotide-binding protein PLES_48441 (286 aa).

ATP is bound at residue 8–15 (GRSGSGKS). A GTP-binding site is contributed by 60 to 63 (DARN).

Belongs to the RapZ-like family.

Its function is as follows. Displays ATPase and GTPase activities. In Pseudomonas aeruginosa (strain LESB58), this protein is Nucleotide-binding protein PLES_48441.